Reading from the N-terminus, the 558-residue chain is Aspartate--tRNA ligase 2, cytoplasmic (558 aa).

Low complexity predominate over residues 1–18 (MSSESEIPPLSSSTAAAE). Residues 1-57 (MSSESEIPPLSSSTAAAEESGEKTSKKAAKKEAAKLEKLRRRQEQEEATRRTASISL) form a disordered region. At Ser-2 the chain carries N-acetylserine. The span at 20-50 (SGEKTSKKAAKKEAAKLEKLRRRQEQEEATR) shows a compositional bias: basic and acidic residues. Positions 110–195 (VLIRGRVHTN…QVEIQVRKVY (86 aa)) form a DNA-binding region, OB. Glu-286 serves as a coordination point for L-aspartate. The segment at 308 to 311 (QLHK) is aspartate. Arg-330 provides a ligand contact to L-aspartate. ATP is bound by residues 330–332 (RAE), 338–340 (RHL), and Glu-481. Mg(2+)-binding residues include Glu-481 and Ser-484. Residues Ser-484 and Arg-488 each contribute to the L-aspartate site. ATP is bound at residue 529–532 (GLER).

The protein belongs to the class-II aminoacyl-tRNA synthetase family. Type 2 subfamily.

The protein resides in the cytoplasm. It localises to the cytosol. The protein localises to the endoplasmic reticulum. The catalysed reaction is tRNA(Asp) + L-aspartate + ATP = L-aspartyl-tRNA(Asp) + AMP + diphosphate. Functionally, catalyzes the specific attachment of an amino acid to its cognate tRNA in a 2 step reaction: the amino acid (AA) is first activated by ATP to form AA-AMP and then transferred to the acceptor end of the tRNA. Involved in the perception of beta-aminobutyric acid (BABA) and required for BABA priming effect in disease resistance. This Arabidopsis thaliana (Mouse-ear cress) protein is Aspartate--tRNA ligase 2, cytoplasmic.